The sequence spans 351 residues: Histidine protein kinase SaeS (351 aa).

Helical transmembrane passes span 9–29 (IIIG…IAYI) and 40–60 (TLTL…SIFI). Positions 61-114 (NPLIQKIKQFNIKTKQFANGNYASNDKTFNSPKEIYELNQSFNKMASEITQQMN) constitute an HAMP domain. Residues 129–348 (NLAHDLKTPL…TMTVTLHKLD (220 aa)) form the Histidine kinase domain. Histidine 132 bears the Phosphohistidine; by autocatalysis mark.

Autophosphorylated.

The protein resides in the cell membrane. It catalyses the reaction ATP + protein L-histidine = ADP + protein N-phospho-L-histidine.. Member of the two-component regulatory system SaeR/SaeS involved in the regulation of staphylococcal virulence factors in a strain-dependent fashion. Probably functions as a membrane-associated protein kinase that upon sensing the appropriate signal, autophosphorylates and in turn activates the cytosolic response regulator SaeR. SaeR/SaeS activates the expression of exoproteins involved in adhesion and invasion of host cells, including hemolysins (hla, hlb, hlgC), coa, DNase, spa and cell wall-associated proteins (emp, eap, fnbA, fnbB, efb). Represses the expression of type 5 capsular polysaccharide (cap operon). Also modulates the expression of several other genes. The protein is Histidine protein kinase SaeS (saeS) of Staphylococcus aureus (strain Newman).